The primary structure comprises 309 residues: Ribosomal RNA large subunit methyltransferase F (309 aa).

The disordered stretch occupies residues M1–H21.

This sequence belongs to the methyltransferase superfamily. METTL16/RlmF family.

The protein resides in the cytoplasm. The catalysed reaction is adenosine(1618) in 23S rRNA + S-adenosyl-L-methionine = N(6)-methyladenosine(1618) in 23S rRNA + S-adenosyl-L-homocysteine + H(+). In terms of biological role, specifically methylates the adenine in position 1618 of 23S rRNA. This chain is Ribosomal RNA large subunit methyltransferase F, found in Desulfotalea psychrophila (strain LSv54 / DSM 12343).